The sequence spans 761 residues: Neurotrypsin (761 aa).

The N-terminal stretch at 1 to 21 is a signal peptide; sequence MALARCVLAVILGALSVVARA. Residues 25 to 87 form a disordered region; that stretch reads SRSPLHRPHP…PPTIPRRCGA (63 aa). The segment covering 38-48 has biased composition (low complexity); the sequence is RSQHAHYLPSS. Positions 85–157 constitute a Kringle domain; that stretch reads CGAGESWGNA…GKVDWGYCDC (73 aa). 17 cysteine pairs are disulfide-bonded: C85–C157, C101–C141, C130–C155, C191–C255, C204–C265, C235–C245, C298–C361, C311–C371, C341–C351, C411–C475, C424–C485, C455–C465, C505–C636, C547–C563, C651–C717, C680–C694, and C707–C736. N-linked (GlcNAc...) asparagine glycosylation is present at N93. 3 SRCR domains span residues 166–267, 273–373, and 386–487; these read IRLV…SCVP, IRLA…TCYP, and IRLV…ICDY. The interval 505–516 is zymogen activation region; sequence CGLRLLHRRQKR. A Peptidase S1 domain is found at 517–760; sequence IIGGNNSLRG…FVPWIKSVTS (244 aa). A glycan (N-linked (GlcNAc...) asparagine) is linked at N521. H562 (charge relay system) is an active-site residue. N-linked (GlcNAc...) asparagine glycosylation occurs at N569. D612 serves as the catalytic Charge relay system. S711 functions as the Charge relay system in the catalytic mechanism.

The protein belongs to the peptidase S1 family. Most abundant in cerebral cortex, hippocampus and amygdala.

Its subcellular location is the secreted. Plays a role in neuronal plasticity and the proteolytic action may subserve structural reorganizations associated with learning and memory operations. The chain is Neurotrypsin (Prss12) from Mus musculus (Mouse).